An 86-amino-acid chain; its full sequence is Trypsin inhibitor (86 aa).

Intrachain disulfides connect Cys8/Cys65 and Cys49/Cys58.

Serine protease inhibitor which is active against trypsin. Displays strong antifungal activity against a number of phytopathogenic fungi including M.melonis, A.cucumerina, A.solani, C.glaeosporioides and P.capsici. The sequence is that of Trypsin inhibitor from Fagopyrum tataricum (Tartarian buckwheat).